The following is a 161-amino-acid chain: HMG1/2-like protein (161 aa).

Disordered stretches follow at residues 1–46, 60–91, and 113–161; these read MKGA…KRAP, FKQK…EKAP, and GESA…DDDE. Basic and acidic residues-rich tracts occupy residues 10–27 and 77–89; these read AKAD…EKPA and AGER…ESEK. Residues 42 to 111 constitute a DNA-binding region (HMG box); it reads PKRAPSAFFV…EYNKAIAAYN (70 aa). The span at 114–123 shows a compositional bias: low complexity; that stretch reads ESAAAAAPKK. Positions 145-161 are enriched in acidic residues; it reads NDDDDDEGSDEDEDDDE.

Belongs to the HMGB family.

The protein localises to the nucleus. This Triticum aestivum (Wheat) protein is HMG1/2-like protein.